The chain runs to 461 residues: tRNA modification GTPase MnmE (461 aa).

(6S)-5-formyl-5,6,7,8-tetrahydrofolate contacts are provided by Lys-32, Glu-89, and Lys-128. The region spanning 224–387 (GHALSIVGKP…LSQKISAFFP (164 aa)) is the TrmE-type G domain. Asn-234 provides a ligand contact to K(+). Residues 234 to 239 (NAGKSS), 253 to 259 (SDIKGTT), and 278 to 281 (DTAG) contribute to the GTP site. A Mg(2+)-binding site is contributed by Ser-238. K(+)-binding residues include Ser-253, Ile-255, and Thr-258. Position 259 (Thr-259) interacts with Mg(2+). Residue Lys-461 participates in (6S)-5-formyl-5,6,7,8-tetrahydrofolate binding.

The protein belongs to the TRAFAC class TrmE-Era-EngA-EngB-Septin-like GTPase superfamily. TrmE GTPase family. As to quaternary structure, homodimer. Heterotetramer of two MnmE and two MnmG subunits. K(+) serves as cofactor.

Its subcellular location is the cytoplasm. Exhibits a very high intrinsic GTPase hydrolysis rate. Involved in the addition of a carboxymethylaminomethyl (cmnm) group at the wobble position (U34) of certain tRNAs, forming tRNA-cmnm(5)s(2)U34. The polypeptide is tRNA modification GTPase MnmE (Helicobacter pylori (strain ATCC 700392 / 26695) (Campylobacter pylori)).